Reading from the N-terminus, the 231-residue chain is Sugar fermentation stimulation protein homolog (231 aa).

The protein belongs to the SfsA family.

This chain is Sugar fermentation stimulation protein homolog, found in Syntrophotalea carbinolica (strain DSM 2380 / NBRC 103641 / GraBd1) (Pelobacter carbinolicus).